Here is a 1408-residue protein sequence, read N- to C-terminus: DNA-directed RNA polymerase subunit beta' (1408 aa).

4 residues coordinate Zn(2+): C70, C72, C85, and C88. Positions 458, 460, and 462 each coordinate Mg(2+). Positions 813, 887, 894, and 897 each coordinate Zn(2+). The disordered stretch occupies residues 1387 to 1408 (AELEAATATAPADAGGDSPATE). Over residues 1389–1408 (LEAATATAPADAGGDSPATE) the composition is skewed to low complexity.

The protein belongs to the RNA polymerase beta' chain family. In terms of assembly, the RNAP catalytic core consists of 2 alpha, 1 beta, 1 beta' and 1 omega subunit. When a sigma factor is associated with the core the holoenzyme is formed, which can initiate transcription. Mg(2+) serves as cofactor. It depends on Zn(2+) as a cofactor.

The enzyme catalyses RNA(n) + a ribonucleoside 5'-triphosphate = RNA(n+1) + diphosphate. Its function is as follows. DNA-dependent RNA polymerase catalyzes the transcription of DNA into RNA using the four ribonucleoside triphosphates as substrates. This is DNA-directed RNA polymerase subunit beta' from Polaromonas sp. (strain JS666 / ATCC BAA-500).